Consider the following 234-residue polypeptide: Transcriptional activator protein TraR (234 aa).

The region spanning 167–232 (TAEDAAWLDP…HLTALAIRRK (66 aa)) is the HTH luxR-type domain. A DNA-binding region (H-T-H motif) is located at residues 191-210 (MEEIADVEGVKYNSVRVKLR).

This sequence belongs to the autoinducer-regulated transcriptional regulatory protein family.

Positive regulation of conjugal transfer of Ti plasmids. TraR activates target genes in the presence of AAI and also activates traR and traI themselves. In Rhizobium radiobacter (Agrobacterium tumefaciens), this protein is Transcriptional activator protein TraR (traR).